We begin with the raw amino-acid sequence, 385 residues long: ELAV-like protein 4 (385 aa).

A disordered region spans residues threonine 12–aspartate 48. The span at serine 18–asparagine 33 shows a compositional bias: low complexity. Residues arginine 34–aspartate 48 show a composition bias toward polar residues. Position 38 is a phosphoserine (serine 38). RRM domains lie at threonine 51–proline 129 and alanine 137–asparagine 217. Serine 233 bears the Phosphoserine mark. Arginine 248 bears the Asymmetric dimethylarginine; by CARM1; alternate mark. Position 248 is an omega-N-methylarginine; by CARM1; alternate (arginine 248). The RRM 3 domain maps to tryptophan 302–asparagine 380.

This sequence belongs to the RRM elav family. In terms of assembly, component of a TAU mRNP complex, at least composed of IGF2BP1, ELAVL4 and G3BP. Associates with the EIF4F cap-binding complex, composed of EIF4G, EIF4A, EIF4E and PABP. Within the EIF4F cap-binding complex, interacts with EIF4A. Interacts with SMN (via Tudor domain) in an RNA-independent manner; the interaction is required for localization of ELAVL4 to RNA granules. Interacts with MAP1 light chain LC1 (via C-terminus); the interaction contributes to the association of ELAVL4 with microtubules. Interacts with MAP1 light chain LC2. In terms of processing, methylated by CARM1, which leads to reduced RNA-binding activity and enhanced interaction with SMN. Methylation at Arg-248 by CARM1 weakens protective binding to the 3'UTR of CDKN1A mRNA and down-regulates CDKN1A protein expression, thereby maintaining cells in a proliferative state. Methylation is inhibited by NGF, which facilitates neurite outgrowth. In terms of tissue distribution, expressed in pancreatic beta cells (at protein level). Expressed in the brain.

It localises to the cytoplasm. It is found in the perikaryon. The protein localises to the cell projection. The protein resides in the dendrite. Its subcellular location is the axon. It localises to the growth cone. RNA-binding protein that is involved in the post-transcriptional regulation of mRNAs. Plays a role in the regulation of mRNA stability, alternative splicing and translation. Binds to AU-rich element (ARE) sequences in the 3' untranslated region (UTR) of target mRNAs, including GAP43, VEGF, FOS, CDKN1A and ACHE mRNA. Many of the target mRNAs are coding for RNA-binding proteins, transcription factors and proteins involved in RNA processing and/or neuronal development and function. By binding to the mRNA 3'UTR, decreases mRNA deadenylation and thereby contributes to the stabilization of mRNA molecules and their protection from decay. Also binds to the polyadenylated (poly(A)) tail in the 3'UTR of mRNA, thereby increasing its affinity for mRNA binding. Mainly plays a role in neuron-specific RNA processing by stabilization of mRNAs such as GAP43, ACHE and mRNAs of other neuronal proteins, thereby contributing to the differentiation of neural progenitor cells, nervous system development, learning and memory mechanisms. Involved in the negative regulation of the proliferative activity of neuronal stem cells and in the positive regulation of neuronal differentiation of neural progenitor cells. Promotes neuronal differentiation of neural stem/progenitor cells in the adult subventricular zone of the hippocampus by binding to and stabilizing SATB1 mRNA. Binds and stabilizes MSI1 mRNA in neural stem cells. Exhibits increased binding to ACHE mRNA during neuronal differentiation, thereby stabilizing ACHE mRNA and enhancing its expression. Protects CDKN1A mRNA from decay by binding to its 3'-UTR. May bind to APP and BACE1 mRNAS and the BACE1AS lncRNA and enhance their stabilization. Plays a role in neurite outgrowth and in the establishment and maturation of dendritic arbors, thereby contributing to neocortical and hippocampal circuitry function. Stabilizes GAP43 mRNA and protects it from decay during postembryonic development in the brain. By promoting the stabilization of GAP43 mRNA, plays a role in NGF-mediated neurite outgrowth. Binds to BDNF long 3'UTR mRNA, thereby leading to its stabilization and increased dendritic translation after activation of PKC. By increasing translation of BDNF after nerve injury, may contribute to nerve regeneration. Acts as a stabilizing factor by binding to the 3'UTR of NOVA1 mRNA, thereby increasing its translation and enhancing its functional activity in neuron-specific splicing. Stimulates translation of mRNA in a poly(A)- and cap-dependent manner, possibly by associating with the EIF4F cap-binding complex. May also negatively regulate translation by binding to the 5'UTR of Ins2 mRNA, thereby repressing its translation. Upon glucose stimulation, Ins2 mRNA is released from ELAVL4 and translational inhibition is abolished. Also plays a role in the regulation of alternative splicing. May regulate alternative splicing of CALCA pre-mRNA into Calcitonin and Calcitonin gene-related peptide 1 (CGRP) by competing with splicing regulator TIAR for binding to U-rich intronic sequences of CALCA pre-mRNA. The protein is ELAV-like protein 4 (ELAVL4) of Homo sapiens (Human).